A 117-amino-acid polypeptide reads, in one-letter code: UPF0127 protein PYRAB11210 (117 aa).

This sequence belongs to the UPF0127 family.

In Pyrococcus abyssi (strain GE5 / Orsay), this protein is UPF0127 protein PYRAB11210.